A 146-amino-acid polypeptide reads, in one-letter code: Large ribosomal subunit protein uL15 (146 aa).

The interval 1-65 (MSDIQLNTLK…GQMPLQRRLP (65 aa)) is disordered. The segment covering 24–34 (RGIGSGLGKTA) has biased composition (gly residues).

This sequence belongs to the universal ribosomal protein uL15 family. As to quaternary structure, part of the 50S ribosomal subunit.

Binds to the 23S rRNA. The chain is Large ribosomal subunit protein uL15 from Bordetella parapertussis (strain 12822 / ATCC BAA-587 / NCTC 13253).